The chain runs to 305 residues: N-acetyl-D-glucosamine kinase (305 aa).

ATP contacts are provided by residues G4–K11 and G133–F140. Zn(2+)-binding residues include H157, C178, C180, and C185.

Belongs to the ROK (NagC/XylR) family. NagK subfamily.

The catalysed reaction is N-acetyl-D-glucosamine + ATP = N-acetyl-D-glucosamine 6-phosphate + ADP + H(+). Its pathway is cell wall biogenesis; peptidoglycan recycling. Catalyzes the phosphorylation of N-acetyl-D-glucosamine (GlcNAc) derived from cell-wall degradation, yielding GlcNAc-6-P. The sequence is that of N-acetyl-D-glucosamine kinase from Histophilus somni (strain 129Pt) (Haemophilus somnus).